Here is a 285-residue protein sequence, read N- to C-terminus: Secreted LysM effector slp2 (285 aa).

The signal sequence occupies residues Met-1–Ala-16. The tract at residues Gly-75–Asn-143 is disordered. Over residues Lys-85–Lys-116 the composition is skewed to basic and acidic residues. Gly residues predominate over residues Gly-117–Ala-139. LysM domains are found at residues Val-157 to Ile-201 and Phe-237 to Leu-281.

Belongs to the secreted LysM effector family.

Functionally, might have a role in sequestration of chitin oligosaccharides (breakdown products of fungal cell walls that are released during invasion and act as triggers of host immunity) to dampen host defense. This is Secreted LysM effector slp2 from Pyricularia oryzae (strain 70-15 / ATCC MYA-4617 / FGSC 8958) (Rice blast fungus).